Consider the following 430-residue polypeptide: Trigger factor (430 aa).

The region spanning 163 to 248 (GNIAIIDFKG…IKDIKVKELP (86 aa)) is the PPIase FKBP-type domain.

It belongs to the FKBP-type PPIase family. Tig subfamily.

It localises to the cytoplasm. The catalysed reaction is [protein]-peptidylproline (omega=180) = [protein]-peptidylproline (omega=0). Its function is as follows. Involved in protein export. Acts as a chaperone by maintaining the newly synthesized protein in an open conformation. Functions as a peptidyl-prolyl cis-trans isomerase. This is Trigger factor from Clostridium botulinum (strain Loch Maree / Type A3).